We begin with the raw amino-acid sequence, 426 residues long: Histidine--tRNA ligase (426 aa).

The protein belongs to the class-II aminoacyl-tRNA synthetase family. As to quaternary structure, homodimer.

The protein localises to the cytoplasm. It catalyses the reaction tRNA(His) + L-histidine + ATP = L-histidyl-tRNA(His) + AMP + diphosphate + H(+). In Streptococcus pyogenes serotype M3 (strain ATCC BAA-595 / MGAS315), this protein is Histidine--tRNA ligase.